Consider the following 294-residue polypeptide: Acetyl-coenzyme A carboxylase carboxyl transferase subunit beta (294 aa).

The 265-residue stretch at 30–294 (IMTKCPECKK…PEAGGESDGE (265 aa)) folds into the CoA carboxyltransferase N-terminal domain. Zn(2+) contacts are provided by C34, C37, C53, and C56. The segment at 34–56 (CPECKKIMYTKELQKNLMVCNYC) adopts a C4-type zinc-finger fold.

The protein belongs to the AccD/PCCB family. Acetyl-CoA carboxylase is a heterohexamer composed of biotin carboxyl carrier protein (AccB), biotin carboxylase (AccC) and two subunits each of ACCase subunit alpha (AccA) and ACCase subunit beta (AccD). The cofactor is Zn(2+).

Its subcellular location is the cytoplasm. It catalyses the reaction N(6)-carboxybiotinyl-L-lysyl-[protein] + acetyl-CoA = N(6)-biotinyl-L-lysyl-[protein] + malonyl-CoA. Its pathway is lipid metabolism; malonyl-CoA biosynthesis; malonyl-CoA from acetyl-CoA: step 1/1. Component of the acetyl coenzyme A carboxylase (ACC) complex. Biotin carboxylase (BC) catalyzes the carboxylation of biotin on its carrier protein (BCCP) and then the CO(2) group is transferred by the transcarboxylase to acetyl-CoA to form malonyl-CoA. This chain is Acetyl-coenzyme A carboxylase carboxyl transferase subunit beta, found in Listeria innocua serovar 6a (strain ATCC BAA-680 / CLIP 11262).